A 230-amino-acid polypeptide reads, in one-letter code: Ribosomal RNA small subunit methyltransferase G (230 aa).

S-adenosyl-L-methionine contacts are provided by residues glycine 95, phenylalanine 100, 146–147, and arginine 159; that span reads GE.

It belongs to the methyltransferase superfamily. RNA methyltransferase RsmG family.

It is found in the cytoplasm. Its function is as follows. Specifically methylates the N7 position of a guanine in 16S rRNA. This chain is Ribosomal RNA small subunit methyltransferase G, found in Parabacteroides distasonis (strain ATCC 8503 / DSM 20701 / CIP 104284 / JCM 5825 / NCTC 11152).